Consider the following 434-residue polypeptide: Trigger factor (434 aa).

The PPIase FKBP-type domain occupies Glu-161 to Pro-246.

It belongs to the FKBP-type PPIase family. Tig subfamily.

The protein localises to the cytoplasm. It catalyses the reaction [protein]-peptidylproline (omega=180) = [protein]-peptidylproline (omega=0). Functionally, involved in protein export. Acts as a chaperone by maintaining the newly synthesized protein in an open conformation. Functions as a peptidyl-prolyl cis-trans isomerase. This is Trigger factor from Pectobacterium atrosepticum (strain SCRI 1043 / ATCC BAA-672) (Erwinia carotovora subsp. atroseptica).